A 585-amino-acid polypeptide reads, in one-letter code: Amyloid protein-binding protein 2 (585 aa).

TPR repeat units follow at residues 50-83 (QGRL…HHCF), 120-153 (IQVG…CTLH), 206-239 (AALY…ITSG), 288-321 (SDTL…RQSV), 333-367 (HEDL…ITHI), 429-462 (AKHY…KEQL), 471-505 (ALSV…GKKL), and 514-547 (EYDY…NRLR).

As to quaternary structure, component of a CRL2 E3 ubiquitin-protein ligase complex, also named ECS (Elongin BC-CUL2/5-SOCS-box protein) complex, composed of CUL2, Elongin BC (ELOB and ELOC), RBX1 and substrate-specific adapter APPBP2. Interacts with APP; APP interaction inhibits the E3 ubiquitin-protein ligase activity of the CRL2(APPBP2) complex. In terms of processing, rapidly degraded by the proteasome upon overexpression of a C-terminal fragment of APP.

It is found in the nucleus. It localises to the cytoplasm. The protein resides in the cytoskeleton. Its subcellular location is the membrane. It functions in the pathway protein modification; protein ubiquitination. With respect to regulation, E3 ubiquitin-protein ligase activity of the CRL2(APPBP2) complex is inhibited by APP. In terms of biological role, substrate-recognition component of a Cul2-RING (CRL2) E3 ubiquitin-protein ligase complex of the DesCEND (destruction via C-end degrons) pathway, which recognizes a C-degron located at the extreme C terminus of target proteins, leading to their ubiquitination and degradation. The C-degron recognized by the DesCEND pathway is usually a motif of less than ten residues and can be present in full-length proteins, truncated proteins or proteolytically cleaved forms. The CRL2(APPBP2) complex specifically recognizes proteins with a -Arg-Xaa-Xaa-Gly degron at the C-terminus, leading to their ubiquitination and degradation. The CRL2(APPBP2) complex mediates ubiquitination and degradation of truncated SELENOV selenoproteins produced by failed UGA/Sec decoding, which end with a -Arg-Xaa-Xaa-Gly degron. May play a role in intracellular protein transport: may be involved in the translocation of APP along microtubules toward the cell surface. The polypeptide is Amyloid protein-binding protein 2 (Rattus norvegicus (Rat)).